The sequence spans 351 residues: Phenoloxidase-activating factor 3 (351 aa).

An N-terminal signal peptide occupies residues 1 to 19; it reads MWLSLVILGVASAIVNVST. N-linked (GlcNAc...) asparagine glycosylation occurs at Asn-16. In terms of domain architecture, Clip spans 22-73; sequence SCTTPNGETATCLPIESCKIFWDYVVTSGADPEINSFLRASLCRQGNYVVCC. 8 disulfides stabilise this stretch: Cys-23–Cys-72, Cys-33–Cys-64, Cys-39–Cys-73, Cys-89–Cys-224, Cys-127–Cys-143, Cys-167–Cys-176, Cys-268–Cys-285, and Cys-295–Cys-326. A Peptidase S1 domain is found at 97-350; that stretch reads VLGGEDTDLG…HLDWIKQNVR (254 aa). The active-site Charge relay system is the His-142. The Ca(2+) site is built by Glu-158, Asp-160, Ala-163, and Asp-166. Asp-204 (charge relay system) is an active-site residue. Ser-299 acts as the Charge relay system in catalysis.

The protein belongs to the peptidase S1 family. CLIP subfamily. In terms of assembly, in the active form, heterodimer of a light chain and a heavy chain; disulfide-linked. Proteolytically cleaved.

The protein resides in the secreted. With respect to regulation, cleavage of PPAF2 is Ca(2+)-independent. Inhibited by heparin. Functionally, serine endopeptidase which, by cleaving prophenoloxidase activating factor PPAF2, is required for the activation of the prophenoloxidase cascade probably following the recognition of pathogen-derived products. In Holotrichia diomphalia (Korean black chafer), this protein is Phenoloxidase-activating factor 3.